The chain runs to 138 residues: Acidic phospholipase A2 1 (138 aa).

Positions 1–16 are cleaved as a signal peptide; sequence MRTLWIVAVWLMGVEG. Disulfide bonds link Cys-42/Cys-131, Cys-44/Cys-60, Cys-59/Cys-111, Cys-65/Cys-138, Cys-66/Cys-104, Cys-73/Cys-97, and Cys-91/Cys-102. 3 residues coordinate Ca(2+): Tyr-43, Gly-45, and Gly-47. His-63 is a catalytic residue. Residue Asp-64 participates in Ca(2+) binding. Asp-105 is an active-site residue.

As to quaternary structure, monomer. Ca(2+) is required as a cofactor. As to expression, expressed by the venom gland.

Its subcellular location is the secreted. The catalysed reaction is a 1,2-diacyl-sn-glycero-3-phosphocholine + H2O = a 1-acyl-sn-glycero-3-phosphocholine + a fatty acid + H(+). Its function is as follows. Snake venom phospholipase that inhibits ADP- and collagen-induced human platelet aggregation. This inhibition is completely inhibited by abolition of catalytic activity in case of collagen as inducer and partially inhibited in case of ADP as inducer. PLA2 catalyzes the calcium-dependent hydrolysis of the 2-acyl groups in 3-sn-phosphoglycerides. The polypeptide is Acidic phospholipase A2 1 (Macrovipera lebetinus (Levantine viper)).